Here is a 79-residue protein sequence, read N- to C-terminus: uncharacterized protein (79 aa).

This is an uncharacterized protein from Methanocaldococcus jannaschii (strain ATCC 43067 / DSM 2661 / JAL-1 / JCM 10045 / NBRC 100440) (Methanococcus jannaschii).